The following is a 95-amino-acid chain: Protein TusB (95 aa).

The protein belongs to the DsrH/TusB family. In terms of assembly, heterohexamer, formed by a dimer of trimers. The hexameric TusBCD complex contains 2 copies each of TusB, TusC and TusD. The TusBCD complex interacts with TusE.

Its subcellular location is the cytoplasm. Functionally, part of a sulfur-relay system required for 2-thiolation of 5-methylaminomethyl-2-thiouridine (mnm(5)s(2)U) at tRNA wobble positions. The sequence is that of Protein TusB from Pectobacterium parmentieri.